Reading from the N-terminus, the 66-residue chain is Cadmium-metallothionein (66 aa).

At S1 the chain carries N-acetylserine. Cd(2+) is bound by residues C9, C13, C18, C20, C24, C26, C30, C32, C35, C38, C40, C45, C47, C51, C57, C59, C63, and C65.

It belongs to the metallothionein superfamily. Type 2 family.

Functionally, the metallothioneins are involved in the cellular sequestration of toxic metal ions and regulation of essential trace elements. Binds almost exclusively cadmium. The sequence is that of Cadmium-metallothionein from Helix pomatia (Roman snail).